The following is a 405-amino-acid chain: Aspartokinase (405 aa).

ACT domains lie at 267-344 (VSME…AKVS) and 345-405 (IVGV…QLDQ).

Belongs to the aspartokinase family.

It catalyses the reaction L-aspartate + ATP = 4-phospho-L-aspartate + ADP. It participates in amino-acid biosynthesis; L-lysine biosynthesis via DAP pathway; (S)-tetrahydrodipicolinate from L-aspartate: step 1/4. The protein operates within amino-acid biosynthesis; L-methionine biosynthesis via de novo pathway; L-homoserine from L-aspartate: step 1/3. Its pathway is amino-acid biosynthesis; L-threonine biosynthesis; L-threonine from L-aspartate: step 1/5. The sequence is that of Aspartokinase (lysC) from Helicobacter pylori (strain J99 / ATCC 700824) (Campylobacter pylori J99).